Here is a 347-residue protein sequence, read N- to C-terminus: UDP-3-O-acylglucosamine N-acyltransferase (347 aa).

H245 acts as the Proton acceptor in catalysis.

It belongs to the transferase hexapeptide repeat family. LpxD subfamily. As to quaternary structure, homotrimer.

It catalyses the reaction a UDP-3-O-[(3R)-3-hydroxyacyl]-alpha-D-glucosamine + a (3R)-hydroxyacyl-[ACP] = a UDP-2-N,3-O-bis[(3R)-3-hydroxyacyl]-alpha-D-glucosamine + holo-[ACP] + H(+). It participates in bacterial outer membrane biogenesis; LPS lipid A biosynthesis. In terms of biological role, catalyzes the N-acylation of UDP-3-O-acylglucosamine using 3-hydroxyacyl-ACP as the acyl donor. Is involved in the biosynthesis of lipid A, a phosphorylated glycolipid that anchors the lipopolysaccharide to the outer membrane of the cell. The chain is UDP-3-O-acylglucosamine N-acyltransferase from Chromohalobacter salexigens (strain ATCC BAA-138 / DSM 3043 / CIP 106854 / NCIMB 13768 / 1H11).